The sequence spans 144 residues: MIQPKPCSVLSLDIGDKRIGIAGCDPLGISITHLPAIFRDSFEKDLKEFEKICFDRRVEGLICGNPLDMNGMETKQSIRCKKYGIKLAKCLKLPLAFINEHCSTLEAKEKFSLKNDKTGRLDSAAAAILLQQWLIEGPDLDDSN.

The protein belongs to the YqgF nuclease family.

It is found in the cytoplasm. Functionally, could be a nuclease involved in processing of the 5'-end of pre-16S rRNA. This is Putative pre-16S rRNA nuclease from Prochlorococcus marinus (strain NATL1A).